The primary structure comprises 467 residues: UDP-N-acetylmuramoylalanine--D-glutamate ligase (467 aa).

118 to 124 (GTNGKTT) lines the ATP pocket.

The protein belongs to the MurCDEF family.

Its subcellular location is the cytoplasm. It carries out the reaction UDP-N-acetyl-alpha-D-muramoyl-L-alanine + D-glutamate + ATP = UDP-N-acetyl-alpha-D-muramoyl-L-alanyl-D-glutamate + ADP + phosphate + H(+). It participates in cell wall biogenesis; peptidoglycan biosynthesis. Its function is as follows. Cell wall formation. Catalyzes the addition of glutamate to the nucleotide precursor UDP-N-acetylmuramoyl-L-alanine (UMA). This Streptomyces avermitilis (strain ATCC 31267 / DSM 46492 / JCM 5070 / NBRC 14893 / NCIMB 12804 / NRRL 8165 / MA-4680) protein is UDP-N-acetylmuramoylalanine--D-glutamate ligase.